The chain runs to 329 residues: NADH-quinone oxidoreductase subunit H (329 aa).

Helical transmembrane passes span 9-29, 42-62, 75-95, 117-137, 154-174, 188-208, 238-258, 269-291, and 309-329; these read LIKI…ATYI, GPCY…IKLF, FIFT…MAPI, IGFL…ILAG, IQLL…LMVV, GGFL…FLIA, LKWG…SFVI, WGFI…LSMW, and WKIM…VILI.

Belongs to the complex I subunit 1 family. In terms of assembly, NDH-1 is composed of 14 different subunits. Subunits NuoA, H, J, K, L, M, N constitute the membrane sector of the complex.

The protein localises to the cell inner membrane. It catalyses the reaction a quinone + NADH + 5 H(+)(in) = a quinol + NAD(+) + 4 H(+)(out). Its function is as follows. NDH-1 shuttles electrons from NADH, via FMN and iron-sulfur (Fe-S) centers, to quinones in the respiratory chain. The immediate electron acceptor for the enzyme in this species is believed to be ubiquinone. Couples the redox reaction to proton translocation (for every two electrons transferred, four hydrogen ions are translocated across the cytoplasmic membrane), and thus conserves the redox energy in a proton gradient. This subunit may bind ubiquinone. In Helicobacter pylori (strain J99 / ATCC 700824) (Campylobacter pylori J99), this protein is NADH-quinone oxidoreductase subunit H.